The following is a 331-amino-acid chain: L-lactate dehydrogenase A chain (331 aa).

NAD(+) is bound by residues 29 to 57 (GMVG…MEDK) and Arg98. 3 residues coordinate substrate: Arg105, Asn137, and Arg168. Asn137 serves as a coordination point for NAD(+). The active-site Proton acceptor is His192. Thr247 is a binding site for substrate.

This sequence belongs to the LDH/MDH superfamily. LDH family. As to quaternary structure, homotetramer.

Its subcellular location is the cytoplasm. It catalyses the reaction (S)-lactate + NAD(+) = pyruvate + NADH + H(+). It functions in the pathway fermentation; pyruvate fermentation to lactate; (S)-lactate from pyruvate: step 1/1. In terms of biological role, interconverts simultaneously and stereospecifically pyruvate and lactate with concomitant interconversion of NADH and NAD(+). In Dissostichus eleginoides (Patagonian toothfish), this protein is L-lactate dehydrogenase A chain (ldha).